Here is a 662-residue protein sequence, read N- to C-terminus: Glycogen debranching enzyme (662 aa).

Catalysis depends on Asp-338, which acts as the Nucleophile. The Proton donor role is filled by Glu-373.

This sequence belongs to the glycosyl hydrolase 13 family.

The catalysed reaction is Hydrolysis of (1-&gt;6)-alpha-D-glucosidic linkages to branches with degrees of polymerization of three or four glucose residues in limit dextrin.. The protein operates within glycan degradation; glycogen degradation. Removes maltotriose and maltotetraose chains that are attached by 1,6-alpha-linkage to the limit dextrin main chain, generating a debranched limit dextrin. The polypeptide is Glycogen debranching enzyme (Yersinia enterocolitica serotype O:8 / biotype 1B (strain NCTC 13174 / 8081)).